A 45-amino-acid chain; its full sequence is Large ribosomal subunit protein bL34 (45 aa).

Positions M1–V45 are disordered. Positions S10 to V45 are enriched in basic residues.

It belongs to the bacterial ribosomal protein bL34 family.

This is Large ribosomal subunit protein bL34 from Prochlorococcus marinus (strain NATL2A).